We begin with the raw amino-acid sequence, 414 residues long: Seminal vesicle secretory protein 2 (414 aa).

The N-terminal stretch at 1–22 (MKSSVFILSLFLLLERQAAVVG) is a signal peptide. The residue at position 23 (Gln-23) is a Pyrrolidone carboxylic acid. Tandem repeats lie at residues 108 to 120 (ESQIKSFRQVKSS), 127 to 139 (GSQLKSFGQVKSS), 140 to 152 (ESQLKSFGQVKAS), 153 to 165 (GSQLKSFGQVKAS), 166 to 178 (GSQLKSYGQMKSS), 179 to 191 (GSQVKSFGQMKSS), 192 to 204 (GSQVKSFGQMKAS), 205 to 217 (ESQIKSFGQRKSQ), 224 to 236 (YGQMKSYGQTKSL), 237 to 249 (ESQAKSFGQVKSQ), 257 to 269 (YGQRKSYGEETQL), 275 to 287 (DAQLKSYGQQKSQ), and 299 to 311 (SAQLKSFGQQKSL). Positions 108-311 (ESQIKSFRQV…LKSFGQQKSL (204 aa)) are 13 X 13 AA tandem repeats. 3 disordered regions span residues 170–228 (KSYG…GQMK), 240–294 (AKSF…SFSQ), and 306–369 (GQQK…FGQE). The segment covering 240–259 (AKSFGQVKSQSGQMKSSYGQ) has biased composition (polar residues). Residues 277–294 (QLKSYGQQKSQKQSSFSQ) show a composition bias toward low complexity. 2 stretches are compositionally biased toward polar residues: residues 306-321 (GQQKSLKGFSQQTQQK) and 342-351 (SVQQKSTQQM). The segment covering 358–369 (SQFGQQRQFGQE) has biased composition (low complexity).

In terms of processing, the repeating unit appears to be involved in the formation of the copulatory plug via a transglutaminase reaction cross-linking glutamine and lysine residues.

Functionally, the rat seminal vesicle contains six major androgen-dependent secretory proteins referred to as SVS I-VI. The SVS I-III proteins appear to be components of the rat copulatory plug, with the SVS II protein being the major component. This Rattus norvegicus (Rat) protein is Seminal vesicle secretory protein 2 (Svs2).